The sequence spans 712 residues: Matrix metalloproteinase-9 (712 aa).

The first 19 residues, 1 to 19 (MSPLQPLVLALLVLACCSA), serve as a signal peptide directing secretion. Positions 20-106 (VPRRRQPTVV…PRCGVPDVGR (87 aa)) are cleaved as a propeptide — activation peptide. N-linked (GlcNAc...) asparagine glycosylation occurs at Asn38. The short motif at 97–104 (PRCGVPDV) is the Cysteine switch element. Position 99 (Cys99) interacts with Zn(2+). N-linked (GlcNAc...) asparagine glycosylation is found at Asn120 and Asn127. The Ca(2+) site is built by Asp131 and Asp165. His175 and Asp177 together coordinate Zn(2+). Positions 182, 183, 185, and 187 each coordinate Ca(2+). His190 is a Zn(2+) binding site. Residues Gly197, Gln199, and Asp201 each contribute to the Ca(2+) site. A Zn(2+)-binding site is contributed by His203. The Ca(2+) site is built by Asp205, Asp206, and Glu208. 3 Fibronectin type-II domains span residues 225 to 273 (AKGA…FCPS), 283 to 331 (ADGK…FCPT), and 342 to 390 (AAGE…FCPD). Disulfide bonds link Cys230–Cys256, Cys244–Cys271, Cys288–Cys314, Cys302–Cys329, Cys347–Cys373, and Cys361–Cys388. A Zn(2+)-binding site is contributed by His401. The active site involves Glu402. The Zn(2+) site is built by His405 and His411. The interval 440–519 (QHLYGPRPEP…PTESPDPAED (80 aa)) is disordered. Positions 455–465 (TTTTTTTTEPQ) are enriched in low complexity. Pro residues predominate over residues 491–504 (TGPPAAGPTGPPTA). A compositionally biased stretch (low complexity) spans 505–514 (GPSAAPTESP). Cys521 and Cys709 are joined by a disulfide. 4 Hemopexin repeats span residues 523 to 568 (VDIF…WPAL), 569 to 613 (PRKL…GLGP), 615 to 662 (VAQV…FPGV), and 663 to 709 (PIST…LLKC).

The protein belongs to the peptidase M10A family. In terms of assembly, exists as monomer or homodimer; disulfide-linked. Also exists as heterodimer with LCN2. Macrophages and transformed cell lines produce only the monomeric form. Interacts with ECM1. The cofactor is Zn(2+). Ca(2+) is required as a cofactor. N- and O-glycosylated.

The protein resides in the secreted. Its subcellular location is the extracellular space. It is found in the extracellular matrix. It carries out the reaction Cleavage of gelatin types I and V and collagen types IV and V.. Its function is as follows. Matrix metalloproteinase that plays an essential role in local proteolysis of the extracellular matrix and in leukocyte migration. Could play a role in bone osteoclastic resorption. Cleaves KiSS1 at a Gly-|-Leu bond. Cleaves NINJ1 to generate the Secreted ninjurin-1 form. Cleaves type IV and type V collagen into large C-terminal three quarter fragments and shorter N-terminal one quarter fragments. Degrades fibronectin but not laminin or Pz-peptide. This chain is Matrix metalloproteinase-9, found in Bos taurus (Bovine).